The primary structure comprises 66 residues: Large ribosomal subunit protein uL29 (66 aa).

This sequence belongs to the universal ribosomal protein uL29 family.

The protein is Large ribosomal subunit protein uL29 of Bartonella quintana (strain Toulouse) (Rochalimaea quintana).